Reading from the N-terminus, the 177-residue chain is MEDVCYLAGGCFWCMEAVFKDIYGINDVQPGYAGGTTVNPTYEEVCSQRTGHAETVRIRYDPEKISFDDILEIYFSVIDPTTLNRQGEDVGTNYRTAIFYINEYQKERAVNYIKNLEASGKYSKIVVSVEPYKNFYPAEDYHKNYFERHPEQGYCRVVIKPKVEKVRQKFFYKINNQ.

The active site involves C11.

Belongs to the MsrA Met sulfoxide reductase family.

It catalyses the reaction L-methionyl-[protein] + [thioredoxin]-disulfide + H2O = L-methionyl-(S)-S-oxide-[protein] + [thioredoxin]-dithiol. It carries out the reaction [thioredoxin]-disulfide + L-methionine + H2O = L-methionine (S)-S-oxide + [thioredoxin]-dithiol. In terms of biological role, has an important function as a repair enzyme for proteins that have been inactivated by oxidation. Catalyzes the reversible oxidation-reduction of methionine sulfoxide in proteins to methionine. The sequence is that of Peptide methionine sulfoxide reductase MsrA from Picrophilus torridus (strain ATCC 700027 / DSM 9790 / JCM 10055 / NBRC 100828 / KAW 2/3).